The primary structure comprises 759 residues: Forkhead box protein M1 (759 aa).

A disordered region spans residues 1–92 (MRTSPRRPLI…MRLPSNPPQS (92 aa)). The span at 48–63 (LAHELEDMAPKSKADQ) shows a compositional bias: basic and acidic residues. Residues 260-358 (RPPYSYMALI…KTASPMSPAD (99 aa)) constitute a DNA-binding region (fork-head). Disordered regions lie at residues 420–450 (AESS…KHLG), 516–535 (SANP…PSNV), and 596–631 (KEHF…RDPV). Residues 601 to 612 (KPTTSSTPSKPT) are compositionally biased toward low complexity.

Localized to the animal hemisphere of early cleavage stage embryos. During neurulation, expressed in the neural folds. Later, expressed in the spinal cord and in the eye field. During tailbud stages, expression is still restricted to the neuroectoderm, predominantly to the hindbrain, the eye and the spinal cord. With ongoing development, expression is also found at lower levels in the branchial arches. At stage 35, expressed in the rhombencephalon and in the eye retina.

Its subcellular location is the nucleus. In terms of biological role, transcription factor regulating the expression of cell cycle genes essential for DNA replication and mitosis. Plays a role in the control of cell proliferation. Also plays a role in DNA break repair, participating in the DNA damage checkpoint response. Promotes transcription of PHB2. The sequence is that of Forkhead box protein M1 from Xenopus laevis (African clawed frog).